The chain runs to 1724 residues: Protein CHROMATIN REMODELING 5 (1724 aa).

Disordered regions lie at residues 24-88 (QNAA…QSST) and 104-415 (DCQP…DDIE). Residues 25–34 (NAATFQSSPL) show a composition bias toward polar residues. Positions 126-144 (EAYHSEDNHSNDRSEKLDS) are enriched in basic and acidic residues. Positions 138–164 (RSEKLDSENENDNENEEEDNEMNKHQS) form a coiled coil. 4 stretches are compositionally biased toward acidic residues: residues 145-157 (ENEN…EEDN), 170-186 (PADE…DEDN), 239-264 (ADMD…DAAD), and 278-297 (VSDE…YEDD). A compositionally biased stretch (basic residues) spans 301–313 (KKPKVRQQSKGFR). A Nuclear localization signal 1 motif is present at residues 320–327 (ERKSFHVS). A compositionally biased stretch (acidic residues) spans 337–350 (QDDDSEEDSENDND). Residues 362-376 (TLRQNNGRSTNTIGQ) show a composition bias toward polar residues. Residues 403-412 (DGKNRKNQKD) show a composition bias toward basic and acidic residues. Residues 420 to 499 (DVIEKVLWHQ…FKKVLNYTKK (80 aa)) form the Chromo 1 domain. A coiled-coil region spans residues 505–525 (RYRTALSREEIEVNDVSKEMD). One can recognise a Chromo 2 domain in the interval 533–597 (SQVERIIADR…REVSIAVQGK (65 aa)). The region spanning 637–809 (VNSWLNDTNV…WALLHFLDPG (173 aa)) is the Helicase ATP-binding domain. 650-657 (DEMGLGKT) contacts ATP. Positions 760-763 (DEAH) match the DEAH box motif. Residues 943-1094 (ILDKLLVRLR…HLVIQKLNAE (152 aa)) enclose the Helicase C-terminal domain. Residues 1126-1163 (KEDKNDEESKKRLLSMDIDEILERAEQVEEKHTDETEH) adopt a coiled-coil conformation. Residues 1199-1245 (ALAPRAARNTKSYVDPSHPDRTSKRKKKGSEPPEHTERSQKRRKTEY) are disordered. 2 short sequence motifs (nuclear localization signal) span residues 1224 to 1231 (KKKGSEPP) and 1348 to 1355 (LKRVQGLQ). A compositionally biased stretch (basic and acidic residues) spans 1227-1237 (GSEPPEHTERS). Disordered stretches follow at residues 1480-1524 (QFKA…EMSD) and 1654-1724 (KFKT…FPPR). Basic and acidic residues predominate over residues 1504–1520 (DGPRKTQKAEPLVKEEG). Positions 1658 to 1667 (AGNSQGSQQV) are enriched in polar residues. Over residues 1669–1691 (KGIDTAKFEAWKRRRRTENDVQT) the composition is skewed to basic and acidic residues. Polar residues predominate over residues 1692 to 1702 (ERPTITNSNSL).

The protein belongs to the SNF2/RAD54 helicase family.

The protein resides in the nucleus. In terms of biological role, DNA-binding helicase that specifically binds to the promoter of target genes, leading to chromatin remodeling, possibly by promoting deposition of histone H3.3. Probable chromatin remodeling factor. This Arabidopsis thaliana (Mouse-ear cress) protein is Protein CHROMATIN REMODELING 5.